A 74-amino-acid polypeptide reads, in one-letter code: Antimicrobial peptide 2 (74 aa).

The signal sequence occupies residues 1 to 22 (MEIKYLLTVFLVLLIVSDHCQA). At lysine 40 the chain carries Lysine amide. Positions 46–74 (DLDGQIDRSRNFRKRDAELEELLSKLPIY) are excised as a propeptide.

In terms of tissue distribution, expressed by the venom gland.

Its subcellular location is the secreted. It localises to the target cell membrane. Has antibacterial activity against the Gram-positive bacteria S.aureus (MIC=48 uM), the Gram-negative bacteria E.coli (MIC=120 uM), and the yeast C.albicans (MIC=64 uM). Causes hemolysis on horse erythrocytes. The chain is Antimicrobial peptide 2 from Androctonus amoreuxi (African fattail scorpion).